Consider the following 169-residue polypeptide: Protein kinase-interacting protein PIKP1 (169 aa).

In terms of assembly, interacts with protein kinase PK1.

Its function is as follows. Plays a role in the stimulation of the viral kinase PK1 function in very late transcription and in expression of genes required for budded virus production. This chain is Protein kinase-interacting protein PIKP1 (AC24), found in Lepidoptera (butterflies and moths).